The following is a 467-amino-acid chain: ATP synthase subunit beta (467 aa).

Residue 150 to 157 (GGAGVGKT) participates in ATP binding.

It belongs to the ATPase alpha/beta chains family. In terms of assembly, F-type ATPases have 2 components, CF(1) - the catalytic core - and CF(0) - the membrane proton channel. CF(1) has five subunits: alpha(3), beta(3), gamma(1), delta(1), epsilon(1). CF(0) has three main subunits: a(1), b(2) and c(9-12). The alpha and beta chains form an alternating ring which encloses part of the gamma chain. CF(1) is attached to CF(0) by a central stalk formed by the gamma and epsilon chains, while a peripheral stalk is formed by the delta and b chains.

It localises to the cell inner membrane. The catalysed reaction is ATP + H2O + 4 H(+)(in) = ADP + phosphate + 5 H(+)(out). Its function is as follows. Produces ATP from ADP in the presence of a proton gradient across the membrane. The catalytic sites are hosted primarily by the beta subunits. This Vibrio parahaemolyticus serotype O3:K6 (strain RIMD 2210633) protein is ATP synthase subunit beta.